A 281-amino-acid chain; its full sequence is NADPH-dependent 7-cyano-7-deazaguanine reductase (281 aa).

87 to 89 (VES) contacts substrate. 89-90 (SK) contributes to the NADPH binding site. The active-site Thioimide intermediate is the Cys188. The Proton donor role is filled by Asp195. 227 to 228 (HE) is a binding site for substrate. Position 256–257 (256–257 (RG)) interacts with NADPH.

The protein belongs to the GTP cyclohydrolase I family. QueF type 2 subfamily. Homodimer.

It is found in the cytoplasm. The enzyme catalyses 7-aminomethyl-7-carbaguanine + 2 NADP(+) = 7-cyano-7-deazaguanine + 2 NADPH + 3 H(+). It functions in the pathway tRNA modification; tRNA-queuosine biosynthesis. Its function is as follows. Catalyzes the NADPH-dependent reduction of 7-cyano-7-deazaguanine (preQ0) to 7-aminomethyl-7-deazaguanine (preQ1). This is NADPH-dependent 7-cyano-7-deazaguanine reductase from Aliivibrio fischeri (strain MJ11) (Vibrio fischeri).